We begin with the raw amino-acid sequence, 261 residues long: tRNA pseudouridine synthase A (261 aa).

D51 (nucleophile) is an active-site residue. Y109 serves as a coordination point for substrate.

It belongs to the tRNA pseudouridine synthase TruA family. Homodimer.

The enzyme catalyses uridine(38/39/40) in tRNA = pseudouridine(38/39/40) in tRNA. Functionally, formation of pseudouridine at positions 38, 39 and 40 in the anticodon stem and loop of transfer RNAs. This is tRNA pseudouridine synthase A from Shewanella baltica (strain OS195).